Here is a 124-residue protein sequence, read N- to C-terminus: Alpha-amylase inhibitor 0.53 (124 aa).

Cystine bridges form between cysteine 20-cysteine 41, cysteine 28-cysteine 83, cysteine 42-cysteine 99, and cysteine 54-cysteine 115.

This sequence belongs to the protease inhibitor I6 (cereal trypsin/alpha-amylase inhibitor) family. In terms of assembly, homodimer. In terms of processing, the disulfide bonds are essential for the inhibitor activity. Endosperm.

The protein localises to the secreted. Alpha-amylase inhibitor. The protein is Alpha-amylase inhibitor 0.53 of Triticum aestivum (Wheat).